A 284-amino-acid chain; its full sequence is Bifunctional protein FolD (284 aa).

Residues 165–167, Ser-190, and Ile-231 contribute to the NADP(+) site; that span reads GAS.

This sequence belongs to the tetrahydrofolate dehydrogenase/cyclohydrolase family. Homodimer.

It carries out the reaction (6R)-5,10-methylene-5,6,7,8-tetrahydrofolate + NADP(+) = (6R)-5,10-methenyltetrahydrofolate + NADPH. The enzyme catalyses (6R)-5,10-methenyltetrahydrofolate + H2O = (6R)-10-formyltetrahydrofolate + H(+). It participates in one-carbon metabolism; tetrahydrofolate interconversion. Catalyzes the oxidation of 5,10-methylenetetrahydrofolate to 5,10-methenyltetrahydrofolate and then the hydrolysis of 5,10-methenyltetrahydrofolate to 10-formyltetrahydrofolate. This chain is Bifunctional protein FolD, found in Polynucleobacter asymbioticus (strain DSM 18221 / CIP 109841 / QLW-P1DMWA-1) (Polynucleobacter necessarius subsp. asymbioticus).